The sequence spans 200 residues: Trem-like transcript 4 protein (200 aa).

A signal peptide spans 1–25 (MAWGGVHTCCFHLCCCCSWPQGAVP). An Ig-like V-type domain is found at 26 to 126 (EELHKHPGQT…NIITVLRNIS (101 aa)). Residues Cys-40 and Cys-109 are joined by a disulfide bond. N-linked (GlcNAc...) asparagine glycosylation occurs at Asn-93.

The protein resides in the secreted. Its function is as follows. Positively regulates Toll-like receptor TLR7 signaling in macrophages. The polypeptide is Trem-like transcript 4 protein (TREML4) (Homo sapiens (Human)).